A 236-amino-acid polypeptide reads, in one-letter code: Snake venom serine protease ussurin (236 aa).

A Peptidase S1 domain is found at 1 to 227 (VIGGVECNIN…YTDWIQSIIS (227 aa)). Cysteines 28 and 44 form a disulfide. Residues His43 and Asp88 each act as charge relay system in the active site. 2 N-linked (GlcNAc...) asparagine glycosylation sites follow: Asn99 and Asn100. Intrachain disulfides connect Cys120–Cys188, Cys152–Cys167, and Cys178–Cys203. Ser182 acts as the Charge relay system in catalysis.

This sequence belongs to the peptidase S1 family. Snake venom subfamily. Monomer. As to expression, expressed by the venom gland.

It localises to the secreted. Snake venom serine protease that may act in the hemostasis system of the prey. This is Snake venom serine protease ussurin from Gloydius ussuriensis (Ussuri mamushi).